A 211-amino-acid chain; its full sequence is Thiamine-phosphate synthase (211 aa).

4-amino-2-methyl-5-(diphosphooxymethyl)pyrimidine-binding positions include 37–41 (QLRIK) and N69. D70 and D89 together coordinate Mg(2+). S108 serves as a coordination point for 4-amino-2-methyl-5-(diphosphooxymethyl)pyrimidine. 134–136 (TQT) provides a ligand contact to 2-[(2R,5Z)-2-carboxy-4-methylthiazol-5(2H)-ylidene]ethyl phosphate. Residue K137 participates in 4-amino-2-methyl-5-(diphosphooxymethyl)pyrimidine binding. 2-[(2R,5Z)-2-carboxy-4-methylthiazol-5(2H)-ylidene]ethyl phosphate contacts are provided by residues G166 and 186–187 (VS).

Belongs to the thiamine-phosphate synthase family. Mg(2+) is required as a cofactor.

It carries out the reaction 2-[(2R,5Z)-2-carboxy-4-methylthiazol-5(2H)-ylidene]ethyl phosphate + 4-amino-2-methyl-5-(diphosphooxymethyl)pyrimidine + 2 H(+) = thiamine phosphate + CO2 + diphosphate. The enzyme catalyses 2-(2-carboxy-4-methylthiazol-5-yl)ethyl phosphate + 4-amino-2-methyl-5-(diphosphooxymethyl)pyrimidine + 2 H(+) = thiamine phosphate + CO2 + diphosphate. The catalysed reaction is 4-methyl-5-(2-phosphooxyethyl)-thiazole + 4-amino-2-methyl-5-(diphosphooxymethyl)pyrimidine + H(+) = thiamine phosphate + diphosphate. The protein operates within cofactor biosynthesis; thiamine diphosphate biosynthesis; thiamine phosphate from 4-amino-2-methyl-5-diphosphomethylpyrimidine and 4-methyl-5-(2-phosphoethyl)-thiazole: step 1/1. In terms of biological role, condenses 4-methyl-5-(beta-hydroxyethyl)thiazole monophosphate (THZ-P) and 2-methyl-4-amino-5-hydroxymethyl pyrimidine pyrophosphate (HMP-PP) to form thiamine monophosphate (TMP). This chain is Thiamine-phosphate synthase, found in Salmonella paratyphi A (strain ATCC 9150 / SARB42).